We begin with the raw amino-acid sequence, 138 residues long: MENNRVNHFLFELVSPEKPVFSEQVVSVVLPSASGALTVMANHAPLVASIVLGSMYVLTSSGEKLFAVCGGVANITSSGCSVLVERVVVVQHLSFHDLEQRILRVRATLEGDSNDGISHKIEDFFHQLKVGDAGLTEA.

It belongs to the ATPase epsilon chain family. In terms of assembly, F-type ATPases have 2 components, CF(1) - the catalytic core - and CF(0) - the membrane proton channel. CF(1) has five subunits: alpha(3), beta(3), gamma(1), delta(1), epsilon(1). CF(0) has three main subunits: a, b and c.

The protein resides in the cell inner membrane. Its function is as follows. Produces ATP from ADP in the presence of a proton gradient across the membrane. This chain is ATP synthase epsilon chain, found in Bartonella henselae (strain ATCC 49882 / DSM 28221 / CCUG 30454 / Houston 1) (Rochalimaea henselae).